A 178-amino-acid polypeptide reads, in one-letter code: Acireductone dioxygenase (178 aa).

Positions 81, 83, 87, and 126 each coordinate Fe(2+). Ni(2+) is bound by residues H81, H83, E87, and H126.

The protein belongs to the acireductone dioxygenase (ARD) family. The cofactor is Fe(2+). Ni(2+) is required as a cofactor.

It localises to the cytoplasm. The protein localises to the nucleus. It carries out the reaction 1,2-dihydroxy-5-(methylsulfanyl)pent-1-en-3-one + O2 = 4-methylsulfanyl-2-oxobutanoate + formate + 2 H(+). It catalyses the reaction 1,2-dihydroxy-5-(methylsulfanyl)pent-1-en-3-one + O2 = 3-(methylsulfanyl)propanoate + CO + formate + 2 H(+). Its pathway is amino-acid biosynthesis; L-methionine biosynthesis via salvage pathway; L-methionine from S-methyl-5-thio-alpha-D-ribose 1-phosphate: step 5/6. Its function is as follows. Catalyzes 2 different reactions between oxygen and the acireductone 1,2-dihydroxy-3-keto-5-methylthiopentene (DHK-MTPene) depending upon the metal bound in the active site. Fe-containing acireductone dioxygenase (Fe-ARD) produces formate and 2-keto-4-methylthiobutyrate (KMTB), the alpha-ketoacid precursor of methionine in the methionine recycle pathway. Ni-containing acireductone dioxygenase (Ni-ARD) produces methylthiopropionate, carbon monoxide and formate, and does not lie on the methionine recycle pathway. The sequence is that of Acireductone dioxygenase (adi1) from Neurospora crassa (strain ATCC 24698 / 74-OR23-1A / CBS 708.71 / DSM 1257 / FGSC 987).